We begin with the raw amino-acid sequence, 545 residues long: EH domain-containing protein 1 (545 aa).

EF-hand domains lie at 14–49 (ENQM…SNLP) and 50–83 (RPEL…VSLA). In terms of domain architecture, EH spans 15-93 (NQMIYKEWFE…QTGHEISHEV (79 aa)). Residues aspartate 27, aspartate 29, aspartate 31, arginine 33, aspartate 38, aspartate 61, tyrosine 67, and glutamate 72 each contribute to the Ca(2+) site. The Dynamin-type G domain occupies 194 to 429 (FDAKPMVMLL…DLLADLKDIP (236 aa)). Positions 204-211 (GQYSTGKT) are G1 motif. 204 to 211 (GQYSTGKT) contacts GTP. A G2 motif region spans residues 230–231 (EP). A G3 motif region spans residues 292 to 295 (DTPG). GTP contacts are provided by residues 309–313 (DFTGV) and lysine 359. The interval 358–361 (NKAD) is G4 motif. Residue valine 382 is a region of interest, G5 motif. Residue 395 to 398 (SFSD) coordinates GTP. Positions 467–490 (KAKAQQKLIDNLEDEFGKVQREHH) form a coiled coil.

The protein belongs to the TRAFAC class dynamin-like GTPase superfamily. Dynamin/Fzo/YdjA family. EHD subfamily. Homooligomer, and heterooligomer with EHD2.

Its subcellular location is the endosome membrane. It is found in the cell membrane. The protein resides in the cytoplasm. It carries out the reaction GTP + H2O = GDP + phosphate + H(+). In terms of biological role, involved in endocytosis positive regulation. Acts in early endocytic membrane fusion and membrane trafficking of recycling endosomes. Confers salt tolerance. The sequence is that of EH domain-containing protein 1 from Arabidopsis thaliana (Mouse-ear cress).